We begin with the raw amino-acid sequence, 1310 residues long: Contactin-associated protein-like 4 (1310 aa).

A signal peptide spans Met1–Ala27. At Gly28–Ala1243 the chain is on the extracellular side. The F5/8 type C domain occupies Cys33–Cys179. A disulfide bond links Cys33 and Cys179. The Laminin G-like 1 domain maps to Phe214–Ile346. N-linked (GlcNAc...) asparagine glycosylation is found at Asn262, Asn287, and Asn361. Disulfide bonds link Cys334–Cys366, Cys517–Cys549, Cys555–Cys566, and Cys560–Cys575. A Laminin G-like 2 domain is found at Phe400–Asp529. Residue Asn540 is glycosylated (N-linked (GlcNAc...) asparagine). The EGF-like 1 domain occupies Ile551–His588. Asn576 is a glycosylation site (N-linked (GlcNAc...) asparagine). Cys577 and Cys587 are joined by a disulfide. One can recognise a Fibrinogen C-terminal domain in the interval Ser589–Trp794. 5 N-linked (GlcNAc...) asparagine glycosylation sites follow: Asn604, Asn627, Asn639, Asn708, and Asn750. Positions Asn795 to Cys960 constitute a Laminin G-like 3 domain. 4 cysteine pairs are disulfide-bonded: Cys933-Cys960, Cys964-Cys977, Cys971-Cys986, and Cys988-Cys998. The EGF-like 2 domain occupies Cys960–Ser999. 3 N-linked (GlcNAc...) asparagine glycosylation sites follow: Asn1019, Asn1025, and Asn1075. The Laminin G-like 4 domain occupies Phe1048 to Cys1204. Residues Cys1169 and Cys1204 are joined by a disulfide bond. Residues Val1244 to Val1264 traverse the membrane as a helical segment. At Arg1265–Phe1310 the chain is on the cytoplasmic side.

It belongs to the neurexin family. In terms of assembly, interacts with TIAM1. Specifically present in developing cortical interneurons: highly expressed in cortical parvalbumin (PV) cells and midbrain dopaminergic neurons and is localized presynaptically (at protein level). Also present in the substantia nigra pars compacta (SnC) and ventral tegmental area (VTA) midbrain dopaminergic projection populations.

The protein resides in the presynaptic cell membrane. In terms of biological role, presynaptic protein involved in both dopaminergic synaptic transmission and GABAergic system, thereby participating in the structural maturation of inhibitory interneuron synapses. Involved in the dopaminergic synaptic transmission by attenuating dopamine release through a presynaptic mechanism. Also participates in the GABAergic system. In Mus musculus (Mouse), this protein is Contactin-associated protein-like 4 (Cntnap4).